The primary structure comprises 148 residues: Protein TIFY 5B (148 aa).

In terms of domain architecture, Tify spans 54–89 (PKQESQILTIFYNGHMCVSSDLTHLEANAILSLASR).

It belongs to the TIFY/JAZ family. In terms of processing, ubiquitinated. Targeted for degradation by the SCF(COI1) E3 ubiquitin ligase-proteasome pathway during jasmonate signaling.

The protein localises to the nucleus. In terms of biological role, repressor of jasmonate responses. The protein is Protein TIFY 5B (TIFY 5B) of Arabidopsis thaliana (Mouse-ear cress).